The following is a 210-amino-acid chain: uncharacterized protein (210 aa).

This is an uncharacterized protein from Treponema pallidum (strain Nichols).